The primary structure comprises 484 residues: Glycogen synthase (484 aa).

An ADP-alpha-D-glucose-binding site is contributed by Lys15.

It belongs to the glycosyltransferase 1 family. Bacterial/plant glycogen synthase subfamily.

The enzyme catalyses [(1-&gt;4)-alpha-D-glucosyl](n) + ADP-alpha-D-glucose = [(1-&gt;4)-alpha-D-glucosyl](n+1) + ADP + H(+). The protein operates within glycan biosynthesis; glycogen biosynthesis. Synthesizes alpha-1,4-glucan chains using ADP-glucose. The sequence is that of Glycogen synthase (glgA) from Bacillus subtilis (strain 168).